A 344-amino-acid chain; its full sequence is Short chain dehydrogenase/reductase mfmJ (344 aa).

NADP(+) is bound by residues L51, K76, D99, N126, Y213, and K217. Residue Y213 is the Proton donor of the active site. Catalysis depends on K217, which acts as the Lowers pKa of active site Tyr.

It belongs to the short-chain dehydrogenases/reductases (SDR) family.

Short chain dehydrogenase/reductase; part of the gene cluster that mediates the biosynthesis of the phthalide-terpenoid hybrid 11'-O-desmethylfendlerol. MfmJ seems not to be involved directly in the biosynthesis of 11'-O-desmethylfendlerol and its role has still to be determined. The biosynthesis of 11'-O-desmethylfendlerol begins with the NR-PKS mfmB that forms 3,5-dimethylorsellinic acid (DMOA), which is then transformed into the phthalide 5,7-dihydroxy-4-(hydroxymethyl)-6-methylphthalide by the cytochrome P450 monooxygenase mfmA and the hydrolase mfmC. Subsequently, the methyltransferase mfmE catalyzes 7-O-methylation to yield 5-hydroxy-4-(hydroxymethyl)-7-methoxy-6-methylphthalide, which undergoes C-3 hydroxylation by the cytochrome P450 monooxygenase mfmF. The resultant cyclopolic acid (2,5-dihydroxy-4-(hydroxymethyl)-7-methoxy-6-methylphthalide) is then farnesylated by the DMATS-type prenyltransferase mfmD to afford 5-O-farnesylcyclopolic acid. Finally, the Pyr4-family terpene cyclase mfmH cyclizes the farnesyl moiety of 5-O-farnesylcyclopolic acid into a drimane-like structure, thus completing the biosynthesis of 11'-O-desmethylfendlerol. The polypeptide is Short chain dehydrogenase/reductase mfmJ (Annulohypoxylon moriforme (Filamentous fungus)).